The primary structure comprises 142 residues: Large ribosomal subunit protein uL13 (142 aa).

Belongs to the universal ribosomal protein uL13 family. Part of the 50S ribosomal subunit.

Its function is as follows. This protein is one of the early assembly proteins of the 50S ribosomal subunit, although it is not seen to bind rRNA by itself. It is important during the early stages of 50S assembly. In Histophilus somni (Haemophilus somnus), this protein is Large ribosomal subunit protein uL13.